Here is a 633-residue protein sequence, read N- to C-terminus: Threonine--tRNA ligase (633 aa).

Positions 1–61 constitute a TGS domain; it reads MINISFPDGS…DNDCRLRILT (61 aa). The interval 242 to 533 is catalytic; sequence DHRKLGKELD…LIEEYAGRFP (292 aa). Residues Cys-333, His-384, and His-510 each contribute to the Zn(2+) site.

The protein belongs to the class-II aminoacyl-tRNA synthetase family. Homodimer. Requires Zn(2+) as cofactor.

It is found in the cytoplasm. The catalysed reaction is tRNA(Thr) + L-threonine + ATP = L-threonyl-tRNA(Thr) + AMP + diphosphate + H(+). In terms of biological role, catalyzes the attachment of threonine to tRNA(Thr) in a two-step reaction: L-threonine is first activated by ATP to form Thr-AMP and then transferred to the acceptor end of tRNA(Thr). Also edits incorrectly charged L-seryl-tRNA(Thr). The polypeptide is Threonine--tRNA ligase (Rickettsia bellii (strain OSU 85-389)).